A 393-amino-acid polypeptide reads, in one-letter code: NAD(P)H-quinone oxidoreductase subunit H, chloroplastic (393 aa).

This sequence belongs to the complex I 49 kDa subunit family. As to quaternary structure, NDH is composed of at least 16 different subunits, 5 of which are encoded in the nucleus.

The protein resides in the plastid. Its subcellular location is the chloroplast thylakoid membrane. It catalyses the reaction a plastoquinone + NADH + (n+1) H(+)(in) = a plastoquinol + NAD(+) + n H(+)(out). The catalysed reaction is a plastoquinone + NADPH + (n+1) H(+)(in) = a plastoquinol + NADP(+) + n H(+)(out). In terms of biological role, NDH shuttles electrons from NAD(P)H:plastoquinone, via FMN and iron-sulfur (Fe-S) centers, to quinones in the photosynthetic chain and possibly in a chloroplast respiratory chain. The immediate electron acceptor for the enzyme in this species is believed to be plastoquinone. Couples the redox reaction to proton translocation, and thus conserves the redox energy in a proton gradient. In Trifolium subterraneum (Subterranean clover), this protein is NAD(P)H-quinone oxidoreductase subunit H, chloroplastic.